The chain runs to 282 residues: Phosphate import ATP-binding protein PstB (282 aa).

A compositionally biased stretch (polar residues) spans 1–25 (MKALNANISTMSEVSRSATPQSDSP). Residues 1–26 (MKALNANISTMSEVSRSATPQSDSPA) form a disordered region. The ABC transporter domain occupies 36-277 (IRIANFNAWY…PQEKRTDDYV (242 aa)). 68–75 (GPSGCGKS) contributes to the ATP binding site.

Belongs to the ABC transporter superfamily. Phosphate importer (TC 3.A.1.7) family. In terms of assembly, the complex is composed of two ATP-binding proteins (PstB), two transmembrane proteins (PstC and PstA) and a solute-binding protein (PstS).

Its subcellular location is the cell inner membrane. The catalysed reaction is phosphate(out) + ATP + H2O = ADP + 2 phosphate(in) + H(+). Its function is as follows. Part of the ABC transporter complex PstSACB involved in phosphate import. Responsible for energy coupling to the transport system. This Rhodopirellula baltica (strain DSM 10527 / NCIMB 13988 / SH1) protein is Phosphate import ATP-binding protein PstB.